Here is a 32-residue protein sequence, read N- to C-terminus: U21-ctenitoxin-Co1a (32 aa).

Disulfide bonds link cysteine 3-cysteine 17, cysteine 10-cysteine 21, and cysteine 16-cysteine 30.

Expressed by the venom gland.

Its subcellular location is the secreted. Functionally, not toxic to mice by intracerebroventricular injection. The polypeptide is U21-ctenitoxin-Co1a (Ctenus ornatus (Brazilian spider)).